The primary structure comprises 467 residues: Protein CitXG (467 aa).

Positions 1–178 (MDYFEGGERL…NKMLHNFEKS (178 aa)) are apo-citrate lyase phosphoribosyl-dephospho-CoA transferase. The 2-(5''-triphosphoribosyl)-3'-dephosphocoenzyme-A synthase stretch occupies residues 179–467 (KMIVPQMTQS…IFLARLVGSL (289 aa)).

In the N-terminal section; belongs to the CitX family. This sequence in the C-terminal section; belongs to the CitG/MdcB family.

The enzyme catalyses apo-[citrate lyase ACP] + 2'-(5''-triphospho-alpha-D-ribosyl)-3'-dephospho-CoA = holo-[citrate lyase ACP] + diphosphate. The catalysed reaction is 3'-dephospho-CoA + ATP = 2'-(5''-triphospho-alpha-D-ribosyl)-3'-dephospho-CoA + adenine. Bifunctional enzyme that catalyzes formation of 2-(5''-triphosphoribosyl)-3'-dephosphocoenzyme-A, and then the transfer of this prosthetic group precursor to the apo-acyl carrier protein (gamma chain) of the citrate lyase to yield the holo-acyl carrier protein. This Leuconostoc mesenteroides subsp. cremoris protein is Protein CitXG (citXG).